Reading from the N-terminus, the 127-residue chain is Holo-[acyl-carrier-protein] synthase (127 aa).

Positions 9 and 58 each coordinate Mg(2+).

This sequence belongs to the P-Pant transferase superfamily. AcpS family. Mg(2+) is required as a cofactor.

The protein resides in the cytoplasm. The enzyme catalyses apo-[ACP] + CoA = holo-[ACP] + adenosine 3',5'-bisphosphate + H(+). Its function is as follows. Transfers the 4'-phosphopantetheine moiety from coenzyme A to a Ser of acyl-carrier-protein. This is Holo-[acyl-carrier-protein] synthase from Shewanella baltica (strain OS185).